The chain runs to 332 residues: 2,3-diketo-L-gulonate reductase (332 aa).

Histidine 44 functions as the Proton donor in the catalytic mechanism. Residues 168–174 (ITMVDMS), 224–225 (WK), and 304–306 (GHE) each bind NAD(+).

The protein belongs to the LDH2/MDH2 oxidoreductase family. DlgD subfamily. As to quaternary structure, homodimer.

The protein localises to the cytoplasm. It carries out the reaction 3-dehydro-L-gulonate + NAD(+) = 2,3-dioxo-L-gulonate + NADH + H(+). The catalysed reaction is 3-dehydro-L-gulonate + NADP(+) = 2,3-dioxo-L-gulonate + NADPH + H(+). Functionally, catalyzes the reduction of 2,3-diketo-L-gulonate in the presence of NADH, to form 3-keto-L-gulonate. The sequence is that of 2,3-diketo-L-gulonate reductase from Haemophilus influenzae (strain ATCC 51907 / DSM 11121 / KW20 / Rd).